Reading from the N-terminus, the 565-residue chain is Nephronectin (565 aa).

The signal sequence occupies residues 1 to 19 (MDFLLALVLVSSLYLQAAA). Residues 52–87 (SWGQCQPVCQPRCKHGECIGPNKCKCHPGYAGKTCN) form the EGF-like 1 domain. Disulfide bonds link C56–C69, C60–C75, C77–C86, C93–C104, C100–C113, and C115–C127. Residues 89-128 (DLNECGLKPRPCKHRCMNTYGSYKCYCLNGYMLMPDGSCS) enclose the EGF-like 2; calcium-binding domain. An EGF-like 3 domain is found at 132-168 (TCSMANCQYGCDVVKGQIRCQCPSPGLQLAPDGRTCV). The region spanning 169 to 213 (DVDECATGRASCPRFRQCVNTFGSYICKCHKGFNLMYIGGKYQCH) is the EGF-like 4; calcium-binding domain. 6 disulfides stabilise this stretch: C173–C186, C180–C195, C197–C212, C218–C231, C225–C240, and C242–C253. In terms of domain architecture, EGF-like 5; calcium-binding spans 214–254 (DIDECSLGQYQCSSFARCYNIHGSYKCKCKEGYQGDGLTCV). Residues 301–373 (YIPPIITNRP…PPGGITVDNR (73 aa)) form a disordered region. A compositionally biased stretch (low complexity) spans 304–316 (PIITNRPTSKPTT). The span at 317 to 349 (RPTPKPTPIPTPPPPPPLPTELRTPLPPTTPER) shows a compositional bias: pro residues. The Integrin interaction motif lies at 382–384 (RGD). The MAM domain maps to 420–563 (HSCNFDHGLC…VSLKKGHCSE (144 aa)).

This sequence belongs to the nephronectin family. As to quaternary structure, homodimer and homotrimer.

The protein resides in the secreted. Its subcellular location is the extracellular space. It localises to the extracellular matrix. Its function is as follows. Functional ligand of integrin alpha-8/beta-1 in kidney development. Regulates the expression of GDNF with integrin alpha-8/beta-1 which is essential for kidney development. May also play a role in the development and function of various tissues, regulating cell adhesion, spreading and survival through the binding of several integrins. This Pongo abelii (Sumatran orangutan) protein is Nephronectin (NPNT).